Here is a 320-residue protein sequence, read N- to C-terminus: Ferrochelatase (320 aa).

Fe cation-binding residues include His194 and Glu275.

Belongs to the ferrochelatase family.

It localises to the cytoplasm. It catalyses the reaction heme b + 2 H(+) = protoporphyrin IX + Fe(2+). It functions in the pathway porphyrin-containing compound metabolism; protoheme biosynthesis; protoheme from protoporphyrin-IX: step 1/1. Catalyzes the ferrous insertion into protoporphyrin IX. The polypeptide is Ferrochelatase (Cronobacter sakazakii (strain ATCC BAA-894) (Enterobacter sakazakii)).